The chain runs to 291 residues: Formamidopyrimidine-DNA glycosylase (291 aa).

The active-site Schiff-base intermediate with DNA is Pro2. The active-site Proton donor is the Glu3. Residue Lys58 is the Proton donor; for beta-elimination activity of the active site. His104, Arg123, and Lys166 together coordinate DNA. The segment at Lys257 to Lys291 adopts an FPG-type zinc-finger fold. Catalysis depends on Arg281, which acts as the Proton donor; for delta-elimination activity.

It belongs to the FPG family. As to quaternary structure, monomer. Requires Zn(2+) as cofactor.

It catalyses the reaction Hydrolysis of DNA containing ring-opened 7-methylguanine residues, releasing 2,6-diamino-4-hydroxy-5-(N-methyl)formamidopyrimidine.. The catalysed reaction is 2'-deoxyribonucleotide-(2'-deoxyribose 5'-phosphate)-2'-deoxyribonucleotide-DNA = a 3'-end 2'-deoxyribonucleotide-(2,3-dehydro-2,3-deoxyribose 5'-phosphate)-DNA + a 5'-end 5'-phospho-2'-deoxyribonucleoside-DNA + H(+). Its function is as follows. Involved in base excision repair of DNA damaged by oxidation or by mutagenic agents. Acts as a DNA glycosylase that recognizes and removes damaged bases. Has a preference for oxidized purines, such as 7,8-dihydro-8-oxoguanine (8-oxoG). Has AP (apurinic/apyrimidinic) lyase activity and introduces nicks in the DNA strand. Cleaves the DNA backbone by beta-delta elimination to generate a single-strand break at the site of the removed base with both 3'- and 5'-phosphates. The polypeptide is Formamidopyrimidine-DNA glycosylase (Rhodopseudomonas palustris (strain TIE-1)).